Here is a 340-residue protein sequence, read N- to C-terminus: MSFIDEAKVYLKAGNGGNGCSSFRREKFIEFGGPDGGNGGNGGNIVFATSNHINTLLYFRYKQHIKAENGNPGSGKKKSGSSGKDIIIKVPIGTQLYDEDGILIADLSSENQKVIVAQGGKGGTGNANYKTSTNRAPRYFTLGEAGEEKYITLKLKIISDIGIIGLPNAGKSSFLASCTDSKTKIADYPFTTLEPHLGVAFIDNRELVLADIPGLIAGAHLGYGIGDKFLKHIERCSTLLHIIDCTLDDIIDSYECIRKELLLYNKELINKPEFIVLNKSDLLEKKEITKKKQLLSQYTKKEIFVSSIKDNRYAILSTLIQYIHKKNANAEPYIYDPFNI.

The Obg domain maps to 1-158 (MSFIDEAKVY…KYITLKLKII (158 aa)). In terms of domain architecture, OBG-type G spans 159–325 (SDIGIIGLPN…LSTLIQYIHK (167 aa)). Residues 165-172 (GLPNAGKS), 190-194 (FTTLE), 211-214 (DIPG), 278-281 (NKSD), and 306-308 (SSI) contribute to the GTP site. Positions 172 and 192 each coordinate Mg(2+).

Belongs to the TRAFAC class OBG-HflX-like GTPase superfamily. OBG GTPase family. As to quaternary structure, monomer. Mg(2+) serves as cofactor.

It localises to the cytoplasm. Its function is as follows. An essential GTPase which binds GTP, GDP and possibly (p)ppGpp with moderate affinity, with high nucleotide exchange rates and a fairly low GTP hydrolysis rate. Plays a role in control of the cell cycle, stress response, ribosome biogenesis and in those bacteria that undergo differentiation, in morphogenesis control. The chain is GTPase Obg from Ehrlichia chaffeensis (strain ATCC CRL-10679 / Arkansas).